We begin with the raw amino-acid sequence, 103 residues long: Putative defensin-like protein 305 (103 aa).

Residues 1 to 31 form the signal peptide; it reads MREEILEIFLLVNFVFILCTSIMVRIRYVSC. Disulfide bonds link C31/C51, C37/C56, and C42/C58.

The protein belongs to the DEFL family.

The protein resides in the secreted. The chain is Putative defensin-like protein 305 from Arabidopsis thaliana (Mouse-ear cress).